The chain runs to 101 residues: Small ribosomal subunit protein uS14 (101 aa).

It belongs to the universal ribosomal protein uS14 family. Part of the 30S ribosomal subunit. Contacts proteins S3 and S10.

Functionally, binds 16S rRNA, required for the assembly of 30S particles and may also be responsible for determining the conformation of the 16S rRNA at the A site. This Polynucleobacter asymbioticus (strain DSM 18221 / CIP 109841 / QLW-P1DMWA-1) (Polynucleobacter necessarius subsp. asymbioticus) protein is Small ribosomal subunit protein uS14.